Consider the following 411-residue polypeptide: Peptidase T (411 aa).

Residue His-79 participates in Zn(2+) binding. The active site involves Asp-81. Residue Asp-142 participates in Zn(2+) binding. Glu-176 serves as the catalytic Proton acceptor. 3 residues coordinate Zn(2+): Glu-177, Asp-199, and His-381.

It belongs to the peptidase M20B family. It depends on Zn(2+) as a cofactor.

The protein resides in the cytoplasm. The enzyme catalyses Release of the N-terminal residue from a tripeptide.. In terms of biological role, cleaves the N-terminal amino acid of tripeptides. This is Peptidase T from Geobacillus kaustophilus (strain HTA426).